A 327-amino-acid chain; its full sequence is Phenylalanine--tRNA ligase alpha subunit (327 aa).

Residue E252 participates in Mg(2+) binding.

The protein belongs to the class-II aminoacyl-tRNA synthetase family. Phe-tRNA synthetase alpha subunit type 1 subfamily. In terms of assembly, tetramer of two alpha and two beta subunits. Requires Mg(2+) as cofactor.

The protein resides in the cytoplasm. The catalysed reaction is tRNA(Phe) + L-phenylalanine + ATP = L-phenylalanyl-tRNA(Phe) + AMP + diphosphate + H(+). This Sodalis glossinidius (strain morsitans) protein is Phenylalanine--tRNA ligase alpha subunit.